Here is an 84-residue protein sequence, read N- to C-terminus: Large ribosomal subunit protein bL27 (84 aa).

Positions Met-1 to Leu-21 are disordered.

The protein belongs to the bacterial ribosomal protein bL27 family.

In Chlorobium luteolum (strain DSM 273 / BCRC 81028 / 2530) (Pelodictyon luteolum), this protein is Large ribosomal subunit protein bL27.